A 415-amino-acid polypeptide reads, in one-letter code: Multidrug resistance protein MdtA (415 aa).

The signal sequence occupies residues 1–21 (MKGSYKSRWVIVIVVVIAAIA). The segment covering 31-47 (DSQSAAPGATKQAQQSP) has biased composition (polar residues). Disordered regions lie at residues 31-60 (DSQSAAPGATKQAQQSPAGGRRGMRSGPLA) and 392-415 (EAQSTTTSEEKATSREYAKKGARS). Residues 399–415 (SEEKATSREYAKKGARS) are compositionally biased toward basic and acidic residues.

This sequence belongs to the membrane fusion protein (MFP) (TC 8.A.1) family. Part of a tripartite efflux system composed of MdtA, MdtB and MdtC.

The protein resides in the cell inner membrane. Functionally, the MdtABC tripartite complex confers resistance against novobiocin and deoxycholate. The sequence is that of Multidrug resistance protein MdtA from Escherichia coli O139:H28 (strain E24377A / ETEC).